Consider the following 353-residue polypeptide: G-protein coupled estrogen receptor 1 (353 aa).

The Extracellular segment spans residues 1–40 (MEEQTTNVIQIYVNGTEQFNASFDFNITDVKESTDTYEFY). Residues 41 to 61 (IIGLFLSCLYTIFLFPIGFIG) form a helical membrane-spanning segment. At 62 to 81 (NILILVVNLNHRERMTIPDL) the chain is on the cytoplasmic side. A helical membrane pass occupies residues 82–102 (YFVNLAVADLILVADSLIEVF). Topologically, residues 103-112 (NLNEKYYDYA) are extracellular. The chain crosses the membrane as a helical span at residues 113–133 (VLCTFMSLFLQVNMYSSIFFL). The cysteines at positions 115 and 192 are disulfide-linked. Residues 134 to 160 (TWMSFDRYVALTSSMSSSPLRTMQHAK) lie on the Cytoplasmic side of the membrane. Residues 161 to 181 (LSCSLIWMASILATLLPFTIV) form a helical membrane-spanning segment. Topologically, residues 182 to 202 (QTQHTGEVHFCFANVFEIQWL) are extracellular. The helical transmembrane segment at 203–223 (EVTIGFLIPFSIIGLCYSLIV) threads the bilayer. The Cytoplasmic segment spans residues 224–245 (RTLMRAQKHKGLWPRRQKALRM). A helical membrane pass occupies residues 246-266 (IVVVVLVFFICWLPENVFISI). The Extracellular portion of the chain corresponds to 267–292 (QLLQGTADPSKRTDTTLWHDYPLTGH). The chain crosses the membrane as a helical span at residues 293 to 313 (IVNLAAFSNSCLNPIIYSFLG). The Cytoplasmic portion of the chain corresponds to 314–353 (ETFRDKLRLFIKRKASWSVVYRFCNHTLDLQIPVRSESEV).

It belongs to the G-protein coupled receptor 1 family. As to quaternary structure, homodimer. Heterodimer. As to expression, expressed in brain regions that are known to control reproduction and sex behavior. Expressed in ovary, muscle and intestine. Expressed in early germ cells of the testis, including the spermatogonia, spermatocytes, and somatic cells such as Sertoli cells.

It is found in the nucleus. Its subcellular location is the cytoplasm. It localises to the perinuclear region. The protein resides in the cytoskeleton. The protein localises to the cytoplasmic vesicle membrane. It is found in the cell membrane. Its subcellular location is the basolateral cell membrane. It localises to the endoplasmic reticulum membrane. The protein resides in the early endosome. The protein localises to the recycling endosome. It is found in the golgi apparatus. Its subcellular location is the trans-Golgi network. It localises to the golgi apparatus membrane. The protein resides in the cell projection. The protein localises to the dendrite. It is found in the dendritic spine membrane. Its subcellular location is the axon. It localises to the postsynaptic density. The protein resides in the mitochondrion membrane. In terms of biological role, membrane G-protein coupled estrogen receptor that binds to 17-beta-estradiol (E2) with high affinity, leading to rapid and transient activation of numerous intracellular signaling pathways. Plays a role in the embryonic development of sensory and motor neurons. Specifically induces apoptosis and reduces proliferation of brain cells. Involved in maintenance of meiotic arrest in oocytes. The polypeptide is G-protein coupled estrogen receptor 1 (gper1) (Danio rerio (Zebrafish)).